A 354-amino-acid chain; its full sequence is Probable L-ascorbate-6-phosphate lactonase UlaG (354 aa).

Belongs to the UlaG family. A divalent metal cation is required as a cofactor.

The protein resides in the cytoplasm. It catalyses the reaction L-ascorbate 6-phosphate + H2O = 3-dehydro-L-gulonate 6-phosphate. It functions in the pathway cofactor degradation; L-ascorbate degradation; D-xylulose 5-phosphate from L-ascorbate: step 1/4. In terms of biological role, probably catalyzes the hydrolysis of L-ascorbate-6-P into 3-keto-L-gulonate-6-P. Is essential for L-ascorbate utilization under anaerobic conditions. This is Probable L-ascorbate-6-phosphate lactonase UlaG from Shigella dysenteriae serotype 1 (strain Sd197).